The chain runs to 300 residues: Ribonuclease HIII (300 aa).

The region spanning Ile83–Lys300 is the RNase H type-2 domain. Residues Asp89, Glu90, and Asp194 each contribute to the a divalent metal cation site.

This sequence belongs to the RNase HII family. RnhC subfamily. The cofactor is Mn(2+). Requires Mg(2+) as cofactor.

The protein localises to the cytoplasm. The catalysed reaction is Endonucleolytic cleavage to 5'-phosphomonoester.. Its function is as follows. Endonuclease that specifically degrades the RNA of RNA-DNA hybrids. This Streptococcus pyogenes serotype M3 (strain ATCC BAA-595 / MGAS315) protein is Ribonuclease HIII.